Here is a 149-residue protein sequence, read N- to C-terminus: 3-dehydroquinate dehydratase (149 aa).

Residue Y26 is the Proton acceptor of the active site. Positions 77, 83, and 90 each coordinate substrate. The active-site Proton donor is H103. Substrate-binding positions include 104-105 (LS) and R114.

Belongs to the type-II 3-dehydroquinase family. Homododecamer.

The enzyme catalyses 3-dehydroquinate = 3-dehydroshikimate + H2O. It participates in metabolic intermediate biosynthesis; chorismate biosynthesis; chorismate from D-erythrose 4-phosphate and phosphoenolpyruvate: step 3/7. Its function is as follows. Catalyzes a trans-dehydration via an enolate intermediate. The protein is 3-dehydroquinate dehydratase (aroQ) of Haemophilus influenzae (strain ATCC 51907 / DSM 11121 / KW20 / Rd).